Here is a 362-residue protein sequence, read N- to C-terminus: [LysW]-lysine hydrolase (362 aa).

His69 is a binding site for Zn(2+). Asp71 is a catalytic residue. A Zn(2+)-binding site is contributed by Asp94. Catalysis depends on Glu127, which acts as the Proton acceptor. Zn(2+) contacts are provided by Glu128, Glu151, and His334.

The protein belongs to the peptidase M20A family. LysK subfamily. Zn(2+) serves as cofactor. Requires Co(2+) as cofactor.

It localises to the cytoplasm. The enzyme catalyses [amino-group carrier protein]-C-terminal-gamma-(L-lysyl)-L-glutamate + H2O = [amino-group carrier protein]-C-terminal-L-glutamate + L-lysine. It functions in the pathway amino-acid biosynthesis; L-lysine biosynthesis via AAA pathway; L-lysine from L-alpha-aminoadipate (Thermus route): step 5/5. In terms of biological role, catalyzes the release of L-lysine from [LysW]-gamma-L-lysine. The polypeptide is [LysW]-lysine hydrolase (Deinococcus radiodurans (strain ATCC 13939 / DSM 20539 / JCM 16871 / CCUG 27074 / LMG 4051 / NBRC 15346 / NCIMB 9279 / VKM B-1422 / R1)).